The following is a 438-amino-acid chain: 26S proteasome regulatory subunit 6A (438 aa).

Residues 1–24 are disordered; that stretch reads MSTLEELDALDQSQQGGSSNNEGL. Residues 11 to 22 show a composition bias toward polar residues; that stretch reads DQSQQGGSSNNE. 226–233 contributes to the ATP binding site; that stretch reads GPPGTGKT.

It belongs to the AAA ATPase family.

The protein resides in the cytoplasm. It localises to the nucleus. Its function is as follows. The 26S proteasome is involved in the ATP-dependent degradation of ubiquitinated proteins. The regulatory (or ATPase) complex confers ATP dependency and substrate specificity to the 26S complex. The polypeptide is 26S proteasome regulatory subunit 6A (tbp1) (Schizosaccharomyces pombe (strain 972 / ATCC 24843) (Fission yeast)).